A 1863-amino-acid polypeptide reads, in one-letter code: Transient receptor potential cation channel subfamily M member 7 (1863 aa).

Met-1 is subject to N-acetylmethionine. Topologically, residues Met-1–His-850 are cytoplasmic. Ser-101 bears the Phosphoserine mark. Positions Asn-544–Thr-555 are enriched in low complexity. A disordered region spans residues Asn-544–Lys-574. A compositionally biased stretch (basic and acidic residues) spans Lys-560–Glu-573. The chain crosses the membrane as a helical span at residues Ala-851–Val-876. Topologically, residues Lys-877–Pro-882 are extracellular. The chain crosses the membrane as a helical span at residues Ser-883 to Val-904. Residues Phe-905 to Tyr-923 are Cytoplasmic-facing. A helical membrane pass occupies residues Phe-924–Phe-943. The Extracellular portion of the chain corresponds to Gly-944–His-956. Residues Val-957–Leu-980 traverse the membrane as a helical segment. At Ala-981–Asn-999 the chain is on the cytoplasmic side. Residues Met-1000–Tyr-1023 form a helical membrane-spanning segment. At Pro-1024–His-1025 the chain is on the extracellular side. Positions Glu-1026–Cys-1066 form an intramembrane region, pore-forming. The Extracellular portion of the chain corresponds to Gly-1067 to Gly-1069. Residues Thr-1070–Asn-1098 traverse the membrane as a helical segment. Residues Val-1099–Leu-1863 lie on the Cytoplasmic side of the membrane. Residues Cys-1143, Cys-1144, and Cys-1146 are each lipidated (S-palmitoyl cysteine). Thr-1163 bears the Phosphothreonine mark. Phosphoserine is present on residues Ser-1191, Ser-1193, Ser-1224, Ser-1255, and Ser-1258. Positions Arg-1198–Thr-1250 form a coiled coil. At Thr-1265 the chain carries Phosphothreonine. Phosphoserine is present on residues Ser-1300, Ser-1357, Ser-1360, Ser-1385, Ser-1386, Ser-1389, Ser-1394, Ser-1395, and Ser-1403. The segment at Asn-1380 to Thr-1418 is disordered. The span at Ser-1385–Pro-1397 shows a compositional bias: low complexity. Polar residues predominate over residues Thr-1398–Cys-1410. Thr-1404 carries the post-translational modification Phosphothreonine. Phosphoserine is present on residues Ser-1406 and Ser-1445. At Thr-1454 the chain carries Phosphothreonine. Ser-1455 carries the phosphoserine modification. Phosphothreonine occurs at positions 1466 and 1470. Residues Ser-1491, Ser-1498, Ser-1502, Ser-1511, Ser-1525, and Ser-1531 each carry the phosphoserine modification. The interval Ser-1498 to Leu-1539 is disordered. Residues Trp-1519 to Pro-1530 show a composition bias toward basic and acidic residues. Thr-1535 carries the post-translational modification Phosphothreonine. Ser-1541 bears the Phosphoserine mark. Position 1549 is a phosphothreonine (Thr-1549). 2 positions are modified to phosphoserine: Ser-1565 and Ser-1567. Thr-1581 is modified (phosphothreonine). Residues Ile-1592 to Leu-1822 enclose the Alpha-type protein kinase domain. 2 positions are modified to phosphoserine: Ser-1596 and Ser-1613. 5 residues coordinate ADP: Gly-1619, Gly-1620, Leu-1621, Arg-1622, and Lys-1646. Ser-1658 carries the post-translational modification Phosphoserine. The residue at position 1683 (Thr-1683) is a Phosphothreonine. Glu-1718, Glu-1719, and Met-1721 together coordinate ADP. His-1751 contributes to the Zn(2+) binding site. The Proton acceptor role is filled by Asp-1765. Asp-1775 contacts ADP. Ser-1777 carries the post-translational modification Phosphoserine. Positions 1808, 1810, and 1814 each coordinate Zn(2+). Residue Thr-1828 is modified to Phosphothreonine. Residues Glu-1838–Leu-1863 form a disordered region. A compositionally biased stretch (polar residues) spans Asp-1841–Leu-1863. A phosphoserine mark is found at Ser-1846, Ser-1849, and Ser-1858.

It in the C-terminal section; belongs to the protein kinase superfamily. Alpha-type protein kinase family. ALPK subfamily. This sequence in the N-terminal section; belongs to the transient receptor (TC 1.A.4) family. LTrpC subfamily. TRPM7 sub-subfamily. As to quaternary structure, homodimer. Homotetramer. Forms heteromers with TRPM6; heteromeric channels are functionally different from the homomeric channels. Interacts with PLCB1. The cofactor is Zn(2+). Post-translationally, palmitoylated; palmitoylation at Cys-1143, Cys-1144 and Cys-1146 promotes TRPM7 trafficking from the Golgi to the surface membrane. In terms of processing, autophosphorylated; autophosphorylation regulates TRPM7 kinase activity towards its substrates. The C-terminal kinase domain can be cleaved from the channel segment in a cell-type-specific fashion. TRPM7 is cleaved by caspase-8, dissociating the kinase from the ion-conducting pore. The cleaved kinase fragments (M7CKs) can translocate to the cell nucleus and binds chromatin-remodeling complex proteins in a Zn(2+)-dependent manner to ultimately phosphorylate specific Ser/Thr residues of histones. Found to be expressed in brain and skeletal muscle, with stronger signals in kidney, heart, liver and spleen.

Its subcellular location is the cell membrane. It is found in the cytoplasmic vesicle membrane. The protein localises to the nucleus. It carries out the reaction L-seryl-[protein] + ATP = O-phospho-L-seryl-[protein] + ADP + H(+). It catalyses the reaction L-threonyl-[protein] + ATP = O-phospho-L-threonyl-[protein] + ADP + H(+). The catalysed reaction is Mg(2+)(in) = Mg(2+)(out). The enzyme catalyses Ca(2+)(in) = Ca(2+)(out). It carries out the reaction Zn(2+)(in) = Zn(2+)(out). Channel displays constitutive activity. Channel activity is negatively regulated by cytosolic Mg(2+), Mg-ATP and low intracellular pH. Resting free cytosolic Mg(2+) and Mg-ATP concentrations seem to be sufficient to block native TRPM7 channel activity. TRPM7 channel activity is highly dependent on membrane levels of phosphatidylinositol 4,5 bisphosphate (PIP2). PIP2 hydrolysis negatively regulates TRPM7 channel activity. TRPM7 kinase activity does not affect channel activity. The kinase activity is controlled through the autophosphorylation of a serine/threonine-rich region located N-terminal to the catalytic domain. Functionally, bifunctional protein that combines an ion channel with an intrinsic kinase domain, enabling it to modulate cellular functions either by conducting ions through the pore or by phosphorylating downstream proteins via its kinase domain. The channel is highly permeable to divalent cations, specifically calcium (Ca2+), magnesium (Mg2+) and zinc (Zn2+) and mediates their influx. Controls a wide range of biological processes such as Ca2(+), Mg(2+) and Zn(2+) homeostasis, vesicular Zn(2+) release channel and intracellular Ca(2+) signaling, embryonic development, immune responses, cell motility, proliferation and differentiation. The C-terminal alpha-kinase domain autophosphorylates cytoplasmic residues of TRPM7. TRPM7 phosphorylates SMAD2, suggesting that TRPM7 kinase may play a role in activating SMAD signaling pathways. In vitro, TRPM7 kinase phosphorylates ANXA1 (annexin A1), myosin II isoforms and a variety of proteins with diverse cellular functions. The cleaved channel exhibits substantially higher current and potentiates Fas receptor signaling. Its function is as follows. The C-terminal kinase domain can be cleaved from the channel segment in a cell-type-specific fashion. In immune cells, the TRPM7 kinase domain is clipped from the channel domain by caspases in response to Fas-receptor stimulation. The cleaved kinase fragments can translocate to the nucleus, and bind chromatin-remodeling complex proteins in a Zn(2+)-dependent manner to ultimately phosphorylate specific Ser/Thr residues of histones known to be functionally important for cell differentiation and embryonic development. The polypeptide is Transient receptor potential cation channel subfamily M member 7 (Trpm7) (Mus musculus (Mouse)).